Reading from the N-terminus, the 586-residue chain is Malonate--CoA ligase ACSF3, mitochondrial (586 aa).

The transit peptide at 1 to 89 directs the protein to the mitochondrion; it reads MPLPYVGMAL…SREICQLRAC (89 aa). Residues 203–211, aspartate 457, arginine 471, and lysine 563 each bind ATP; that span reads TSGTTGRPK.

The protein belongs to the ATP-dependent AMP-binding enzyme family.

The protein resides in the mitochondrion. The catalysed reaction is tetracosanoate + ATP + CoA = tetracosanoyl-CoA + AMP + diphosphate. It catalyses the reaction malonate + ATP + CoA = malonyl-CoA + AMP + diphosphate. Functionally, catalyzes the initial reaction in intramitochondrial fatty acid synthesis, by activating malonate and methylmalonate, but not acetate, into their respective CoA thioester. May have some preference toward very-long-chain substrates. The polypeptide is Malonate--CoA ligase ACSF3, mitochondrial (Bos taurus (Bovine)).